The chain runs to 288 residues: Serine/threonine-protein phosphatase PGAM5, mitochondrial (288 aa).

Over Met-1–Ala-6 the chain is Mitochondrial matrix. The helical transmembrane segment at Leu-7–Gly-29 threads the bilayer. The Mitochondrial intermembrane portion of the chain corresponds to Lys-30–Ser-288. The interval Asn-76 to Glu-81 is interaction with KEAP1. Residues Ser-79 and Ser-86 each carry the phosphoserine modification. N6-acetyllysine occurs at positions 115, 143, and 190.

It belongs to the phosphoglycerate mutase family. BPG-dependent PGAM subfamily. As to quaternary structure, dimer. Forms a ternary complex with NFE2L2 and KEAP1. Interacts with BCL2L1 and MAP3K5. Upon TNF-induced necrosis, forms in complex with RIPK1, RIPK3 and MLKL; the formation of this complex leads to PGAM5 phosphorylation. Isoform 2, but not isoform 1, interacts with DNM1L; this interaction leads to DNM1L dephosphorylation and activation and eventually to mitochondria fragmentation. Phosphorylated by the RIPK1/RIPK3 complex under necrotic conditions. This phosphorylation increases PGAM5 phosphatase activity. In terms of processing, proteolytically cleaved by PARL in response to loss of mitochondrial membrane potential.

It is found in the mitochondrion outer membrane. The protein localises to the mitochondrion inner membrane. The enzyme catalyses O-phospho-L-seryl-[protein] + H2O = L-seryl-[protein] + phosphate. It catalyses the reaction O-phospho-L-threonyl-[protein] + H2O = L-threonyl-[protein] + phosphate. Its function is as follows. Mitochondrial serine/threonine phosphatase that dephosphorylates various substrates and thus plays a role in different biological processes including cellular senescence or mitophagy. Modulates cellular senescence by regulating mitochondrial dynamics. Mechanistically, participates in mitochondrial fission through dephosphorylating DNM1L/DRP1. Additionally, dephosphorylates MFN2 in a stress-sensitive manner and consequently protects it from ubiquitination and degradation to promote mitochondrial network formation. Regulates mitophagy independent of PARKIN by interacting with and dephosphorylating FUNDC1, which interacts with LC3. Regulates anti-oxidative response by forming a tertiary complex with KEAP1 and NRF2. Regulates necroptosis by acting as a RIPK3 target and recruiting the RIPK1-RIPK3-MLKL necrosis 'attack' complex to mitochondria. This is Serine/threonine-protein phosphatase PGAM5, mitochondrial (Pgam5) from Mus musculus (Mouse).